The primary structure comprises 175 residues: Regenerating islet-derived protein 3-alpha (175 aa).

A signal peptide spans 1–26 (MLPHLVLNSISWMLLSCLLFVFQVQG). A propeptide spanning residues 27-37 (EDFQKEVPSPR) is cleaved from the precursor. Disulfide bonds link C40/C51, C68/C171, and C146/C163. The C-type lectin domain maps to 47–172 (YRSHCYALVM…CDGTLPFVCK (126 aa)). 4 residues coordinate Zn(2+): H50, H107, E121, and H145. A sufficient to activate EXTL3 region spans residues 103-118 (WIGLHDPTMGQQPNGG).

Forms a hexameric membrane-permeabilizing oligomeric pore on membrane phospholipids. The hexamer is formed by three dimers related by helical symmetry. Forms filaments, filamentation traps pore complexes and limits damage to host cells. Interacts with EXTL3. Proteolytic processing by trypsin removes an inhibitory N-terminal propeptide and is essential for peptidoglycan binding and antibacterial activity. Small intestine and pancreas.

Its subcellular location is the secreted. In terms of biological role, bactericidal C-type lectin. The lack of the EPN motif may explain its inability to bind peptidoglycan. Functionally, acts as a hormone in response to different stimuli like anti-inflammatory signals, such as IL17A, or gut microbiome. Secreted by different cell types to activate its receptor EXTL3 and induce cell specific signaling pathways. Induced by IL17A in keratinocytes, regulates keratinocyte proliferation and differentiation after skin injury via activation of EXTL3-PI3K-AKT signaling pathway. In parallel, inhibits skin inflammation through the inhibition of inflammatory cytokines such as IL6 and TNF. In pancreas, is able to permealize beta-cells membrane and stimulate their proliferation. The polypeptide is Regenerating islet-derived protein 3-alpha (Reg3a) (Mus musculus (Mouse)).